The primary structure comprises 64 residues: Chassatide C7 (64 aa).

A propeptide spans 1–35 (VLVASLVMLEAQSSDTIQVPDWGKRLLMNHDSNRV) (removed in mature form). 3 cysteine pairs are disulfide-bonded: C39–C55, C43–C57, and C48–C62.

As to expression, expressed in fruit, pedicel, root and stem but not in leaf (at protein level).

In terms of biological role, probably participates in a plant defense mechanism. Active against E.coli ATTC25922 but not against S.aureus ATCC 12600 or S.epidermidis ATCC 14990. Has cytotoxic and hemolytic activity. The protein is Chassatide C7 of Chassalia chartacea (Chassalia curviflora).